The following is a 411-amino-acid chain: Argininosuccinate synthase (411 aa).

Residues 13–21 (AYSGGLDTS) and alanine 40 contribute to the ATP site. 2 residues coordinate L-citrulline: tyrosine 91 and serine 96. Glycine 121 is an ATP binding site. Residues threonine 123, asparagine 127, and aspartate 128 each contribute to the L-aspartate site. Residue asparagine 127 participates in L-citrulline binding. L-citrulline is bound by residues arginine 131, serine 182, serine 191, glutamate 267, and tyrosine 279.

This sequence belongs to the argininosuccinate synthase family. Type 1 subfamily. Homotetramer.

The protein resides in the cytoplasm. It carries out the reaction L-citrulline + L-aspartate + ATP = 2-(N(omega)-L-arginino)succinate + AMP + diphosphate + H(+). It participates in amino-acid biosynthesis; L-arginine biosynthesis; L-arginine from L-ornithine and carbamoyl phosphate: step 2/3. This is Argininosuccinate synthase from Bartonella tribocorum (strain CIP 105476 / IBS 506).